The chain runs to 581 residues: Kelch-like protein 38 (581 aa).

Positions 34-101 (TDVSICSGAW…VYTGEVHISA (68 aa)) constitute a BTB domain. Residues 136–237 (CLGLVRLAEI…HPAFFHHFIA (102 aa)) enclose the BACK domain. Kelch repeat units follow at residues 285-332 (FLLL…TLHR), 334-383 (VYVL…THRN), 384-431 (FIFS…VKDQ), 433-479 (LYLF…VLGE), 480-521 (QIVI…VMGN), and 523-573 (LYVT…TLQC).

The protein is Kelch-like protein 38 (Klhl38) of Mus musculus (Mouse).